Consider the following 318-residue polypeptide: DNA repair nuclease/redox regulator APEX1 (318 aa).

Residues 1–33 (MPKRGKKGAVAEDGDELRTEPEAKKSKTAAKKN) are necessary for interaction with YBX1, binding to RNA, association together with NPM1 to rRNA, endoribonuclease activity on abasic RNA and localization in the nucleoli. The disordered stretch occupies residues 1–60 (MPKRGKKGAVAEDGDELRTEPEAKKSKTAAKKNDKEAAGEGPALYEDPPDQKTSPSGKPA). N6-acetyllysine; by EP300 is present on residues lysine 6 and lysine 7. Residues 8–13 (GAVAED) carry the Nuclear localization signal (NLS) motif. Basic and acidic residues predominate over residues 16–38 (ELRTEPEAKKSKTAAKKNDKEAA). The segment at 23-33 (AKKSKTAAKKN) is necessary for interaction with NPM1 and for efficient rRNA binding. Lysine 27, lysine 31, lysine 32, and lysine 35 each carry N6-acetyllysine. Serine 54 is modified (phosphoserine). A Nuclear export signal (NES) motif is present at residues 64–80 (ICSWNVDGLRAWIKKKG). Position 65 is an S-nitrosocysteine; alternate (cysteine 65). A disulfide bridge links cysteine 65 with cysteine 93. Position 70 (aspartate 70) interacts with Mg(2+). At cysteine 93 the chain carries S-nitrosocysteine; alternate. Glutamate 96 contributes to the Mg(2+) binding site. Residue tyrosine 171 is part of the active site. At lysine 197 the chain carries N6-acetyllysine. Aspartate 210 and asparagine 212 together coordinate Mg(2+). The active-site Proton donor/acceptor is the aspartate 210. A Phosphothreonine; by CDK5 modification is found at threonine 233. Residues 289-318 (HSLLPALCDSKIRSKALGSDHCPITLYLAL) form a mitochondrial targeting sequence (MTS) region. Aspartate 308 lines the Mg(2+) pocket. Cysteine 310 carries the S-nitrosocysteine modification.

It belongs to the DNA repair enzymes AP/ExoA family. In terms of assembly, monomer. Homodimer; disulfide-linked. Component of the SET complex, composed of at least APEX1, SET, ANP32A, HMGB2, NME1 and TREX1. Associates with the dimer XRCC5/XRCC6 in a DNA-dependent manner. Interacts with SIRT1; the interaction is increased in the context of genotoxic stress. Interacts with HDAC1, HDAC2 and HDAC3; the interactions are not dependent on the APEX1 acetylation status. Interacts with XRCC1; the interaction is induced by SIRT1 and increased with the APEX1 acetylated form. Interacts with NPM1 (via N-terminal domain); the interaction is RNA-dependent and decreases in hydrogen peroxide-damaged cells. Interacts (via N-terminus) with YBX1 (via C-terminus); the interaction is increased in presence of APEX1 acetylated at Lys-6 and Lys-7. Interacts with HNRNPL; the interaction is DNA-dependent. Interacts (via N-terminus) with KPNA1 and KPNA2. Interacts with TXN; the interaction stimulates the FOS/JUN AP-1 complex DNA-binding activity in a redox-dependent manner. Interacts with GZMA, KRT8, MDM2, POLB, PRDX6, PRPF19, RPLP0, TOMM20 and WDR77. Binds to CDK5. The cofactor is Mg(2+). Mn(2+) is required as a cofactor. In terms of processing, phosphorylated. Phosphorylation by kinase PKC or casein kinase CK2 results in enhanced redox activity that stimulates binding of the FOS/JUN AP-1 complex to its cognate binding site. AP-endodeoxyribonuclease activity is not affected by CK2-mediated phosphorylation. Phosphorylation of Thr-233 by CDK5 in response to MPP(+)/MPTP (1-methyl-4-phenylpyridinium) reduces AP-endodeoxyribonuclease activity resulting in accumulation of DNA damage and contributing to neuronal death. Post-translationally, acetylated on Lys-6 and Lys-7. Acetylation is increased by the transcriptional coactivator EP300 acetyltransferase, genotoxic agents like H(2)O(2) and methyl methanesulfonate (MMS). Acetylation increases its binding affinity to the negative calcium response element (nCaRE) DNA promoter. The acetylated form induces a stronger binding of YBX1 to the Y-box sequence in the MDR1 promoter than the unacetylated form. Deacetylated on lysines. Lys-6 and Lys-7 are deacetylated by SIRT1. Cleaved at Lys-31 by granzyme A to create the mitochondrial form; leading in reduction of binding to DNA, AP endodeoxyribonuclease activity, redox activation of transcription factors and to enhanced cell death. Cleaved by granzyme K; leading to intracellular ROS accumulation and enhanced cell death after oxidative stress. In terms of processing, cys-69 and Cys-93 are nitrosylated in response to nitric oxide (NO) and lead to the exposure of the nuclear export signal (NES). Post-translationally, ubiquitinated by MDM2; leading to translocation to the cytoplasm and proteasomal degradation.

It localises to the nucleus. It is found in the nucleolus. Its subcellular location is the nucleus speckle. The protein resides in the endoplasmic reticulum. The protein localises to the cytoplasm. It localises to the mitochondrion. The enzyme catalyses a deoxyribonucleotide-2'-deoxyribose-5'-monophosphate-DNA + H2O = a 5'-end 2'-deoxyribose-5'-monophosphate-DNA + a 3'-end 2'-deoxyribonucleotide-DNA + H(+). It carries out the reaction Exonucleolytic cleavage in the 3'- to 5'-direction to yield nucleoside 5'-phosphates.. The catalysed reaction is a 3'-end 2'-deoxyribonucleotide-3'-phosphoglycolate-DNA + H2O = 2-phosphoglycolate + a 3'-end 2'-deoxyribonucleotide-DNA + H(+). It catalyses the reaction a 3'-end 2'-deoxyribonucleotide-8-oxoguanine-DNA + H2O = 8-oxo-dGMP + a 3'-end 2'-deoxyribonucleotide-DNA + H(+). NPM1 stimulates endodeoxyribonuclease activity on double-stranded DNA with AP sites, but inhibits endoribonuclease activity on single-stranded RNA containing AP sites. Multifunctional protein that plays a central role in the cellular response to oxidative stress. The two major activities of APEX1 are DNA repair and redox regulation of transcriptional factors. Functions as an apurinic/apyrimidinic (AP) endodeoxyribonuclease in the base excision repair (BER) pathway of DNA lesions induced by oxidative and alkylating agents. Initiates repair of AP sites in DNA by catalyzing hydrolytic incision of the phosphodiester backbone immediately adjacent to the damage, generating a single-strand break with 5'-deoxyribose phosphate and 3'-hydroxyl ends. Also incises at AP sites in the DNA strand of DNA/RNA hybrids, single-stranded DNA regions of R-loop structures, and single-stranded RNA molecules. Operates at switch sites of immunoglobulin (Ig) constant regions where it mediates Ig isotype class switch recombination. Processes AP sites induced by successive action of AICDA and UNG. Generates staggered nicks in opposite DNA strands resulting in the formation of double-strand DNA breaks that are finally resolved via non-homologous end joining repair pathway. Has 3'-5' exodeoxyribonuclease activity on mismatched deoxyribonucleotides at the 3' termini of nicked or gapped DNA molecules during short-patch BER. Possesses DNA 3' phosphodiesterase activity capable of removing lesions (such as phosphoglycolate and 8-oxoguanine) blocking the 3' side of DNA strand breaks. Also acts as an endoribonuclease involved in the control of single-stranded RNA metabolism. Plays a role in regulating MYC mRNA turnover by preferentially cleaving in between UA and CA dinucleotides of the MYC coding region determinant (CRD). In association with NMD1, plays a role in the rRNA quality control process during cell cycle progression. Acts as a loading factor for POLB onto non-incised AP sites in DNA and stimulates the 5'-terminal deoxyribose 5'-phosphate (dRp) excision activity of POLB. Exerts reversible nuclear redox activity to regulate DNA binding affinity and transcriptional activity of transcriptional factors by controlling the redox status of their DNA-binding domain, such as the FOS/JUN AP-1 complex after exposure to IR. Involved in calcium-dependent down-regulation of parathyroid hormone (PTH) expression by binding to negative calcium response elements (nCaREs). Together with HNRNPL or the dimer XRCC5/XRCC6, associates with nCaRE, acting as an activator of transcriptional repression. May also play a role in the epigenetic regulation of gene expression by participating in DNA demethylation. Stimulates the YBX1-mediated MDR1 promoter activity, when acetylated at Lys-6 and Lys-7, leading to drug resistance. Plays a role in protection from granzyme-mediated cellular repair leading to cell death. Binds DNA and RNA. Associates, together with YBX1, on the MDR1 promoter. Together with NPM1, associates with rRNA. This Pan paniscus (Pygmy chimpanzee) protein is DNA repair nuclease/redox regulator APEX1 (APEX1).